The following is a 147-amino-acid chain: Flagellar assembly factor FliW (147 aa).

The protein belongs to the FliW family. In terms of assembly, interacts with translational regulator CsrA and flagellin(s).

The protein resides in the cytoplasm. In terms of biological role, acts as an anti-CsrA protein, binds CsrA and prevents it from repressing translation of its target genes, one of which is flagellin. Binds to flagellin and participates in the assembly of the flagellum. This is Flagellar assembly factor FliW from Oceanobacillus iheyensis (strain DSM 14371 / CIP 107618 / JCM 11309 / KCTC 3954 / HTE831).